We begin with the raw amino-acid sequence, 206 residues long: Probable 5-formyltetrahydrofolate cyclo-ligase (206 aa).

ATP is bound by residues 8–12 and Arg-12; that span reads KSELR. Residues Val-54, Glu-59, and 146 to 150 each bind substrate; that span reads HGKGY. 143–151 contributes to the ATP binding site; sequence RCGHGKGYY. 2 residues coordinate Mg(2+): Asp-152 and Asp-188.

The protein belongs to the 5-formyltetrahydrofolate cyclo-ligase family. As to quaternary structure, monomer. Mg(2+) serves as cofactor.

The protein localises to the cytoplasm. It carries out the reaction (6S)-5-formyl-5,6,7,8-tetrahydrofolate + ATP = (6R)-5,10-methenyltetrahydrofolate + ADP + phosphate. Contributes to tetrahydrofolate metabolism. Helps regulate carbon flow through the folate-dependent one-carbon metabolic network that supplies carbon for the biosynthesis of purines, thymidine and amino acids. Catalyzes the irreversible conversion of 5-formyltetrahydrofolate (5-CHO-H(4)PteGlu) to yield 5,10-methenyltetrahydrofolate. The sequence is that of Probable 5-formyltetrahydrofolate cyclo-ligase from Caenorhabditis elegans.